The sequence spans 227 residues: Probable GTP-binding protein EngB (227 aa).

One can recognise an EngB-type G domain in the interval 30 to 219 (KKPQIIVVGR…MVKINKNVNE (190 aa)). GTP is bound by residues 38–45 (GRSNVGKS), 63–67 (GVTLK), 80–83 (DLPG), 160–163 (NKMD), and 197–199 (IGI). Residues Ser45 and Thr65 each contribute to the Mg(2+) site.

It belongs to the TRAFAC class TrmE-Era-EngA-EngB-Septin-like GTPase superfamily. EngB GTPase family. It depends on Mg(2+) as a cofactor.

Functionally, necessary for normal cell division and for the maintenance of normal septation. The sequence is that of Probable GTP-binding protein EngB from Methanococcus aeolicus (strain ATCC BAA-1280 / DSM 17508 / OCM 812 / Nankai-3).